The primary structure comprises 261 residues: Global transcriptional regulator CodY (261 aa).

The segment at 1–159 (MANLLDKTRK…ASTVVGLQLL (159 aa)) is GAF domain. The segment at residues 207–226 (ASVIADRIGITRSVIVNALR) is a DNA-binding region (H-T-H motif).

The protein belongs to the CodY family.

It localises to the cytoplasm. DNA-binding global transcriptional regulator which is involved in the adaptive response to starvation and acts by directly or indirectly controlling the expression of numerous genes in response to nutrient availability. During rapid exponential growth, CodY is highly active and represses genes whose products allow adaptation to nutrient depletion. This is Global transcriptional regulator CodY from Streptococcus thermophilus (strain CNRZ 1066).